An 825-amino-acid chain; its full sequence is Lon protease (825 aa).

The Lon N-terminal domain maps to 41 to 237; the sequence is LPIIFIPNTI…KVIQLLLEQK (197 aa). 388–395 serves as a coordination point for ATP; the sequence is GPPGTGKT. Residues 625-805 enclose the Lon proteolytic domain; sequence SNPPGVVTGL…DEVLYEALGL (181 aa). Residues S711 and K754 contribute to the active site.

The protein belongs to the peptidase S16 family. Homohexamer. Organized in a ring with a central cavity.

The protein resides in the cytoplasm. The catalysed reaction is Hydrolysis of proteins in presence of ATP.. Its function is as follows. ATP-dependent serine protease that mediates the selective degradation of mutant and abnormal proteins as well as certain short-lived regulatory proteins. Required for cellular homeostasis and for survival from DNA damage and developmental changes induced by stress. Degrades polypeptides processively to yield small peptide fragments that are 5 to 10 amino acids long. Binds to DNA in a double-stranded, site-specific manner. The chain is Lon protease from Methanosphaera stadtmanae (strain ATCC 43021 / DSM 3091 / JCM 11832 / MCB-3).